Consider the following 188-residue polypeptide: Peptidyl-tRNA hydrolase (188 aa).

Residue Y14 participates in tRNA binding. H19 functions as the Proton acceptor in the catalytic mechanism. Residues Y64, N66, and N112 each coordinate tRNA.

It belongs to the PTH family. As to quaternary structure, monomer.

The protein resides in the cytoplasm. It catalyses the reaction an N-acyl-L-alpha-aminoacyl-tRNA + H2O = an N-acyl-L-amino acid + a tRNA + H(+). Hydrolyzes ribosome-free peptidyl-tRNAs (with 1 or more amino acids incorporated), which drop off the ribosome during protein synthesis, or as a result of ribosome stalling. Its function is as follows. Catalyzes the release of premature peptidyl moieties from peptidyl-tRNA molecules trapped in stalled 50S ribosomal subunits, and thus maintains levels of free tRNAs and 50S ribosomes. The chain is Peptidyl-tRNA hydrolase from Clostridium novyi (strain NT).